Here is a 488-residue protein sequence, read N- to C-terminus: Lysine--tRNA ligase (488 aa).

Mg(2+)-binding residues include glutamate 397 and glutamate 404.

This sequence belongs to the class-II aminoacyl-tRNA synthetase family. Homodimer. It depends on Mg(2+) as a cofactor.

The protein resides in the cytoplasm. It carries out the reaction tRNA(Lys) + L-lysine + ATP = L-lysyl-tRNA(Lys) + AMP + diphosphate. In Mycoplasmopsis fermentans (strain ATCC 19989 / NBRC 14854 / NCTC 10117 / PG18) (Mycoplasma fermentans), this protein is Lysine--tRNA ligase (lysS).